The primary structure comprises 73 residues: Gas vesicle protein A (73 aa).

Belongs to the gas vesicle GvpA family. The gas vesicle shell is 2 nm thick and consists of a single layer of this protein. It forms helical ribs nearly perpendicular to the long axis of the vesicle.

Its subcellular location is the gas vesicle shell. Functionally, gas vesicles are hollow, gas filled proteinaceous nanostructures found in some microorganisms. During planktonic growth they allow positioning of the organism at a favorable depth for light or nutrient acquisition. GvpA forms the protein shell. The sequence is that of Gas vesicle protein A from Nostoc punctiforme (strain ATCC 29133 / PCC 73102).